The sequence spans 127 residues: Fluoride-specific ion channel FluC (127 aa).

The next 4 helical transmembrane spans lie at 4–24 (TLLAVFIGGGVGSVARWQLGV), 35–55 (LGTLLANLIGAFVIGGALAFF), 71–91 (TGLCGGLTTFSTFSAEVVMFL), and 103–123 (VLLNLAGSLLMTALAFALVTW). Residues Gly75 and Thr78 each coordinate Na(+).

It belongs to the fluoride channel Fluc/FEX (TC 1.A.43) family.

It localises to the cell inner membrane. The enzyme catalyses fluoride(in) = fluoride(out). Its activity is regulated as follows. Na(+) is not transported, but it plays an essential structural role and its presence is essential for fluoride channel function. In terms of biological role, fluoride-specific ion channel. Important for reducing fluoride concentration in the cell, thus reducing its toxicity. This Pectobacterium atrosepticum (strain SCRI 1043 / ATCC BAA-672) (Erwinia carotovora subsp. atroseptica) protein is Fluoride-specific ion channel FluC.